The following is a 56-amino-acid chain: Potassium channel toxin alpha-KTx 9.1 (56 aa).

The N-terminal stretch at 1–28 is a signal peptide; that stretch reads MSRLFTLVLIVLAMNVMMAIISDPVVEA. Cystine bridges form between Cys31–Cys47, Cys34–Cys52, and Cys38–Cys54.

In terms of tissue distribution, expressed by the venom gland.

The protein localises to the secreted. Its function is as follows. Blocks small conductance calcium-activated potassium channels (KCNN, SK). Weakly inhibits the Kv7.1/KCNQ1 channel (10 uM of the toxin inhibits currents by 23.3%). Low toxicity by intracerebroventricular injection into mice. This chain is Potassium channel toxin alpha-KTx 9.1, found in Olivierus martensii (Manchurian scorpion).